A 432-amino-acid polypeptide reads, in one-letter code: Trigger factor (432 aa).

Residues 161 to 246 (EDRVTIDFTG…LKKVEERELP (86 aa)) form the PPIase FKBP-type domain.

The protein belongs to the FKBP-type PPIase family. Tig subfamily. In terms of assembly, homodimer and monomer. In vivo most of the ribosomes are in complex with monomeric TF. Uncomplexed TF, however, is in a monomer-dimer equilibrium with approximately two thirds of TF existing in a dimeric state.

The protein resides in the cytoplasm. The enzyme catalyses [protein]-peptidylproline (omega=180) = [protein]-peptidylproline (omega=0). Functionally, involved in protein export. Acts as a chaperone by maintaining the newly synthesized protein in an open conformation. Functions as a peptidyl-prolyl cis-trans isomerase. The protein is Trigger factor of Shigella boydii serotype 4 (strain Sb227).